Here is a 545-residue protein sequence, read N- to C-terminus: CTP synthase (545 aa).

Residues 1–266 (MTTNYIFVTG…DDYICKRFSL (266 aa)) form an amidoligase domain region. Residue Ser-14 participates in CTP binding. Residue Ser-14 coordinates UTP. Residues 15–20 (SLGKGI) and Asp-72 contribute to the ATP site. Residues Asp-72 and Glu-140 each contribute to the Mg(2+) site. Residues 147-149 (DIE), 187-192 (KTKPTQ), and Lys-223 contribute to the CTP site. UTP is bound by residues 187–192 (KTKPTQ) and Lys-223. Residue 239 to 241 (KDV) coordinates ATP. In terms of domain architecture, Glutamine amidotransferase type-1 spans 291 to 542 (TIGMVGKYIE…VKAASEFQKR (252 aa)). Position 352 (Gly-352) interacts with L-glutamine. Residue Cys-379 is the Nucleophile; for glutamine hydrolysis of the active site. Residues 380–383 (LGMQ), Glu-403, and Arg-470 each bind L-glutamine. Active-site residues include His-515 and Glu-517.

It belongs to the CTP synthase family. Homotetramer.

It catalyses the reaction UTP + L-glutamine + ATP + H2O = CTP + L-glutamate + ADP + phosphate + 2 H(+). The catalysed reaction is L-glutamine + H2O = L-glutamate + NH4(+). It carries out the reaction UTP + NH4(+) + ATP = CTP + ADP + phosphate + 2 H(+). Its pathway is pyrimidine metabolism; CTP biosynthesis via de novo pathway; CTP from UDP: step 2/2. With respect to regulation, allosterically activated by GTP, when glutamine is the substrate; GTP has no effect on the reaction when ammonia is the substrate. The allosteric effector GTP functions by stabilizing the protein conformation that binds the tetrahedral intermediate(s) formed during glutamine hydrolysis. Inhibited by the product CTP, via allosteric rather than competitive inhibition. Functionally, catalyzes the ATP-dependent amination of UTP to CTP with either L-glutamine or ammonia as the source of nitrogen. Regulates intracellular CTP levels through interactions with the four ribonucleotide triphosphates. The chain is CTP synthase from Escherichia coli O127:H6 (strain E2348/69 / EPEC).